Reading from the N-terminus, the 655-residue chain is UvrABC system protein C (655 aa).

The GIY-YIG domain maps to 16–95 (TDPGVYRFRD…IKEFAPRYNL (80 aa)). One can recognise a UVR domain in the interval 207 to 242 (KRFIGTLEKQMAEAVAELDYERAARLRDDVIALRKV).

This sequence belongs to the UvrC family. As to quaternary structure, interacts with UvrB in an incision complex.

It localises to the cytoplasm. Its function is as follows. The UvrABC repair system catalyzes the recognition and processing of DNA lesions. UvrC both incises the 5' and 3' sides of the lesion. The N-terminal half is responsible for the 3' incision and the C-terminal half is responsible for the 5' incision. The protein is UvrABC system protein C of Renibacterium salmoninarum (strain ATCC 33209 / DSM 20767 / JCM 11484 / NBRC 15589 / NCIMB 2235).